The following is a 1341-amino-acid chain: WASH complex subunit 2A (1341 aa).

A sufficient for interaction with WASHC3, WASHC4 and WASHC5; required for interaction with WASHC1 region spans residues M1–D220. A compositionally biased stretch (low complexity) spans G202–D214. The disordered stretch occupies residues G202–P405. A compositionally biased stretch (acidic residues) spans D220–E232. A compositionally biased stretch (basic and acidic residues) spans D233–R244. Acidic residues-rich tracts occupy residues S250–C259 and E266–E276. Positions L293–E307 are enriched in basic and acidic residues. The span at G355–G366 shows a compositional bias: gly residues. The interval S356–E600 is sufficient for interaction with CCDC93. Positions S356 to V742 are required for interaction with CCDC22 and VPS35L. The tract at residues G357–Q1341 is interaction with VPS35. Short sequence motifs (LFa) lie at residues L367–F378, V411–F419, L450–F463, and I482–F491. The interval A422 to S554 is disordered. Residues F451 to F462 show a composition bias toward acidic residues. The span at D507–V517 shows a compositional bias: basic and acidic residues. The segment covering T518–G536 has biased composition (polar residues). Short sequence motifs (LFa) lie at residues L537 to F548, L572 to F583, and L617 to P629. At S539 the chain carries Phosphoserine. 3 disordered regions span residues D621 to L664, D696 to V739, and E751 to G838. Residues S637–D647 show a composition bias toward basic and acidic residues. 3 consecutive short sequence motifs (LFa) follow at residues L664–F674, L690–F702, and L726–G738. The span at E751 to L768 shows a compositional bias: basic and acidic residues. Positions L803–I817 match the LFa 11 motif. The span at E823–P834 shows a compositional bias: basic and acidic residues. 3 short sequence motifs (LFa) span residues V839 to F847, D856 to F862, and L878 to F888. Disordered stretches follow at residues D881–S951 and F988–E1205. 2 stretches are compositionally biased toward basic and acidic residues: residues Q898–D911 and K917–W931. The interaction with phospholipids stretch occupies residues Q937–Q1341. Residues N1028–R1046 show a composition bias toward basic residues. Positions K1029–R1047 are required for interaction with F-actin-capping protein subunit alpha (CAPZA1 or CAPZA2 or CAPZA3). 2 positions are modified to phosphoserine: S1054 and S1087. The span at E1094–G1110 shows a compositional bias: low complexity. S1114 bears the Phosphoserine mark. Short sequence motifs (LFa) lie at residues L1129 to F1136, M1171 to F1185, L1201 to F1209, I1234 to F1240, L1262 to F1270, and I1290 to F1299. Over residues I1135–V1145 the composition is skewed to polar residues. The tract at residues G1302–K1326 is disordered. An LFa 21 motif is present at residues I1330–F1338.

Belongs to the FAM21 family. In terms of assembly, component of the WASH core complex also described as WASH regulatory complex (SHRC) composed of WASH (WASHC1, WASH2P or WASH3P), WASHC2 (WASHC2A or WASHC2C), WASHC3, WASHC4 and WASHC5; in the complex interacts (via N-terminus) directly with WASHC1. The WASH core complex associates with the F-actin-capping protein dimer (formed by CAPZA1, CAPZA2 or CAPZA3 and CAPZB) in a transient or substoichiometric manner which was initially described as WASH complex. Interacts with VPS35; mediates the association with the retromer CSC complex. Interacts with FKBP15. Interacts with CCDC93, CCDC22, VPS35L; indicative for an association of the WASH core complex with the CCC and retriever complexes. Directly interacts with TBC1D23.

The protein localises to the early endosome membrane. It localises to the cell membrane. Acts at least in part as component of the WASH core complex whose assembly at the surface of endosomes inhibits WASH nucleation-promoting factor (NPF) activity in recruiting and activating the Arp2/3 complex to induce actin polymerization and is involved in the fission of tubules that serve as transport intermediates during endosome sorting. Mediates the recruitment of the WASH core complex to endosome membranes via binding to phospholipids and VPS35 of the retromer CSC. Mediates the recruitment of the F-actin-capping protein dimer to the WASH core complex probably promoting localized F-actin polymerization needed for vesicle scission. Via its C-terminus binds various phospholipids, most strongly phosphatidylinositol 4-phosphate (PtdIns-(4)P), phosphatidylinositol 5-phosphate (PtdIns-(5)P) and phosphatidylinositol 3,5-bisphosphate (PtdIns-(3,5)P2). Involved in the endosome-to-plasma membrane trafficking and recycling of SNX27-retromer-dependent cargo proteins, such as GLUT1. Required for the association of DNAJC13, ENTR1, ANKRD50 with retromer CSC subunit VPS35. Required for the endosomal recruitment of CCC complex subunits COMMD1 and CCDC93 as well as the retriever complex subunit VPS35L. The protein is WASH complex subunit 2A of Homo sapiens (Human).